The chain runs to 277 residues: S-formylglutathione hydrolase FrmB (277 aa).

Catalysis depends on charge relay system residues Ser-145, Asp-221, and His-254.

The protein belongs to the esterase D family.

It carries out the reaction S-formylglutathione + H2O = formate + glutathione + H(+). Serine hydrolase involved in the detoxification of formaldehyde. Hydrolyzes S-formylglutathione to glutathione and formate. In Escherichia coli (strain ATCC 8739 / DSM 1576 / NBRC 3972 / NCIMB 8545 / WDCM 00012 / Crooks), this protein is S-formylglutathione hydrolase FrmB (frmB).